A 513-amino-acid chain; its full sequence is ATP synthase subunit alpha (513 aa).

169-176 is an ATP binding site; sequence GDRQTGKT.

This sequence belongs to the ATPase alpha/beta chains family. In terms of assembly, F-type ATPases have 2 components, CF(1) - the catalytic core - and CF(0) - the membrane proton channel. CF(1) has five subunits: alpha(3), beta(3), gamma(1), delta(1), epsilon(1). CF(0) has three main subunits: a(1), b(2) and c(9-12). The alpha and beta chains form an alternating ring which encloses part of the gamma chain. CF(1) is attached to CF(0) by a central stalk formed by the gamma and epsilon chains, while a peripheral stalk is formed by the delta and b chains.

It localises to the cell inner membrane. The catalysed reaction is ATP + H2O + 4 H(+)(in) = ADP + phosphate + 5 H(+)(out). Produces ATP from ADP in the presence of a proton gradient across the membrane. The alpha chain is a regulatory subunit. The protein is ATP synthase subunit alpha of Ruthia magnifica subsp. Calyptogena magnifica.